A 154-amino-acid chain; its full sequence is UPF0225 protein YpsIP31758_1970 (154 aa).

This sequence belongs to the UPF0225 family.

This chain is UPF0225 protein YpsIP31758_1970, found in Yersinia pseudotuberculosis serotype O:1b (strain IP 31758).